We begin with the raw amino-acid sequence, 442 residues long: Trigger factor (442 aa).

One can recognise a PPIase FKBP-type domain in the interval 162-247 (GDTVTIDYKG…IHEVKSKQLP (86 aa)).

It belongs to the FKBP-type PPIase family. Tig subfamily.

The protein localises to the cytoplasm. It catalyses the reaction [protein]-peptidylproline (omega=180) = [protein]-peptidylproline (omega=0). Functionally, involved in protein export. Acts as a chaperone by maintaining the newly synthesized protein in an open conformation. Functions as a peptidyl-prolyl cis-trans isomerase. The protein is Trigger factor of Lactobacillus acidophilus (strain ATCC 700396 / NCK56 / N2 / NCFM).